The sequence spans 293 residues: Probable metal transport system membrane protein CPn_0543/CP_0209/CPj0543/CpB0565 (293 aa).

7 helical membrane passes run 12–32, 41–61, 68–88, 101–121, 140–160, 183–203, and 253–273; these read LLILLPTFLAALGASVAGGVM, IVSISGSISHAILGGIGLTLW, LSFFPMYGAIVGAIFLALCIG, LIAMIWSVGMAIGIIFISRLP, PSDLYSLGIFDLLVLGIVVLC, LWYFLLLVLTAITIVMLIYVM, and FPVGPTISLLMGLGYTASLCV.

It belongs to the ABC-3 integral membrane protein family.

It localises to the cell inner membrane. Part of an ATP-driven transport system CPn_0541/CPn_0542/CPn_0543 for a metal. In Chlamydia pneumoniae (Chlamydophila pneumoniae), this protein is Probable metal transport system membrane protein CPn_0543/CP_0209/CPj0543/CpB0565.